The primary structure comprises 186 residues: Ribosome-recycling factor (186 aa).

Positions 135–162 are disordered; the sequence is DGMDGLKKAEKDGDIGQDESRAQSERVQ.

Belongs to the RRF family.

The protein localises to the cytoplasm. In terms of biological role, responsible for the release of ribosomes from messenger RNA at the termination of protein biosynthesis. May increase the efficiency of translation by recycling ribosomes from one round of translation to another. The protein is Ribosome-recycling factor of Sinorhizobium fredii (strain NBRC 101917 / NGR234).